We begin with the raw amino-acid sequence, 970 residues long: uncharacterized protein (970 aa).

The disordered stretch occupies residues 942–970; that stretch reads QLSFEEDGWTESEPRPVRREAHVRAKERH. Residues 953 to 970 show a composition bias toward basic and acidic residues; the sequence is SEPRPVRREAHVRAKERH.

This is an uncharacterized protein from Frog virus 3 (isolate Goorha) (FV-3).